Consider the following 424-residue polypeptide: Serine--tRNA ligase (424 aa).

T231–E233 contributes to the L-serine binding site. R262–E264 contacts ATP. An L-serine-binding site is contributed by E285. E349–S352 is an ATP binding site. S385 provides a ligand contact to L-serine.

The protein belongs to the class-II aminoacyl-tRNA synthetase family. Type-1 seryl-tRNA synthetase subfamily. In terms of assembly, homodimer. The tRNA molecule binds across the dimer.

It is found in the cytoplasm. The catalysed reaction is tRNA(Ser) + L-serine + ATP = L-seryl-tRNA(Ser) + AMP + diphosphate + H(+). It carries out the reaction tRNA(Sec) + L-serine + ATP = L-seryl-tRNA(Sec) + AMP + diphosphate + H(+). It functions in the pathway aminoacyl-tRNA biosynthesis; selenocysteinyl-tRNA(Sec) biosynthesis; L-seryl-tRNA(Sec) from L-serine and tRNA(Sec): step 1/1. Functionally, catalyzes the attachment of serine to tRNA(Ser). Is also able to aminoacylate tRNA(Sec) with serine, to form the misacylated tRNA L-seryl-tRNA(Sec), which will be further converted into selenocysteinyl-tRNA(Sec). This chain is Serine--tRNA ligase, found in Bacillus cereus (strain G9842).